Consider the following 249-residue polypeptide: Aquaporin (249 aa).

Residues 1 to 11 (MTRKWIKKLQS) lie on the Cytoplasmic side of the membrane. The chain crosses the membrane as a helical span at residues 12–32 (YIGEFFASFIFGFAVYTSIIG). The Extracellular segment spans residues 33–39 (SAQTGQS). Residues 40 to 60 (AGPIIVALTIALSGVAIIYSF) traverse the membrane as a helical segment. Over 61–83 (CDITVAHFNPAITFSAMCFRRLP) the chain is Cytoplasmic. The short motif at 69–71 (NPA) is the NPA element. Residues 84–104 (FFGGIFIIIFQVAGFIIAGLA) form a helical membrane-spanning segment. Topologically, residues 105–133 (SVAVLPGKYKNKLEIARPKRVADNVSRGR) are extracellular. The helical transmembrane segment at 134–154 (IFGTEFFLTAILVYVAFAVGV) threads the bilayer. The Cytoplasmic segment spans residues 155 to 179 (NPYTPPKDEHGDQLDPDEGLTEGRK). The helical transmembrane segment at 180 to 200 (ITAPLAIGFTLGFCALLGIAS) threads the bilayer. The Extracellular segment spans residues 201–223 (SGGAFNPGIVLSPMILTGTWDFW). An NPG motif is present at residues 206–208 (NPG). A helical transmembrane segment spans residues 224–246 (WVYLLGQFSGGLLGGGLQRFLLY). Topologically, residues 247-249 (KIF) are cytoplasmic.

The protein belongs to the MIP/aquaporin (TC 1.A.8) family.

It localises to the cell membrane. In terms of biological role, water channel required to facilitate the transport of water across membranes. Involved in osmotolerance. This chain is Aquaporin (AQP), found in Vairimorpha ceranae (strain BRL01) (Microsporidian parasite).